Reading from the N-terminus, the 96-residue chain is Prokineticin Bv8-like peptide 2 (96 aa).

The first 19 residues, 1–19, serve as a signal peptide directing secretion; that stretch reads MKCFAQIVVLLLVIAFSHG. 5 disulfide bridges follow: Cys-26–Cys-38, Cys-32–Cys-50, Cys-37–Cys-78, Cys-60–Cys-86, and Cys-80–Cys-95.

Belongs to the AVIT (prokineticin) family. In terms of tissue distribution, expressed by the skin glands.

The protein resides in the secreted. Potent agonist for both PKR1/PROKR1 and PKR2/PROKR2, and inducer of a potent and long-lasting hyperalgesia. Also potentiates capsaicin-induced TRPV1 current when tested on DRG neurons. At subnanomolar concentrations, this protein both induces potent chemotaxis of macrophages and stimulates LPS-induced production of the pro-inflammatory cytokines IL-1 and IL-12. In vivo, potently stimulates the contraction of the guinea-pig gastrointestinal (GI) smooth muscle (nanomolar concentration) and rabbit aortic rings. The polypeptide is Prokineticin Bv8-like peptide 2 (Bombina maxima (Giant fire-bellied toad)).